The following is a 42-amino-acid chain: Large ribosomal subunit protein bL36 (42 aa).

The protein belongs to the bacterial ribosomal protein bL36 family.

The protein is Large ribosomal subunit protein bL36 of Ehrlichia chaffeensis (strain ATCC CRL-10679 / Arkansas).